A 409-amino-acid polypeptide reads, in one-letter code: Toluene 1,2-dioxygenase system ferredoxin--NAD(+) reductase component (409 aa).

Residue 4–35 participates in FAD binding; the sequence is HVAIIGNGVGGFTTAQALRAEGFEGRISLIGD. 145–173 is an NAD(+) binding site; sequence RLLIVGGGLIGCEVATTARKLGLSVTILE.

Belongs to the bacterial ring-hydroxylating dioxygenase ferredoxin reductase family. As to quaternary structure, this dioxygenase system consists of four proteins: the two subunits of the hydroxylase component (todC1 and todC2), a ferredoxin (TodB) and a ferredoxin reductase (TodA). FAD serves as cofactor.

It carries out the reaction 2 reduced [2Fe-2S]-[ferredoxin] + NAD(+) + H(+) = 2 oxidized [2Fe-2S]-[ferredoxin] + NADH. It participates in xenobiotic degradation; toluene degradation. In terms of biological role, part of the electron transfer component of toluene 1,2-dioxygenase, transfers electrons from ferredoxin (TodB) to NADH. The polypeptide is Toluene 1,2-dioxygenase system ferredoxin--NAD(+) reductase component (todA) (Pseudomonas putida (Arthrobacter siderocapsulatus)).